A 186-amino-acid polypeptide reads, in one-letter code: uncharacterized protein (186 aa).

The signal sequence occupies residues 1-18 (MKKFFFAAALVVSGLLVG). The N-palmitoyl cysteine moiety is linked to residue Cys19. Cys19 is lipidated: S-diacylglycerol cysteine.

It localises to the cell membrane. This is an uncharacterized protein from Salmonella typhimurium (strain LT2 / SGSC1412 / ATCC 700720).